The primary structure comprises 433 residues: Serine hydroxymethyltransferase (433 aa).

(6S)-5,6,7,8-tetrahydrofolate is bound by residues Leu131 and 135 to 137; that span reads GHL. Lys240 carries the N6-(pyridoxal phosphate)lysine modification.

Belongs to the SHMT family. Homodimer. It depends on pyridoxal 5'-phosphate as a cofactor.

It localises to the cytoplasm. The catalysed reaction is (6R)-5,10-methylene-5,6,7,8-tetrahydrofolate + glycine + H2O = (6S)-5,6,7,8-tetrahydrofolate + L-serine. It participates in one-carbon metabolism; tetrahydrofolate interconversion. It functions in the pathway amino-acid biosynthesis; glycine biosynthesis; glycine from L-serine: step 1/1. In terms of biological role, catalyzes the reversible interconversion of serine and glycine with tetrahydrofolate (THF) serving as the one-carbon carrier. This reaction serves as the major source of one-carbon groups required for the biosynthesis of purines, thymidylate, methionine, and other important biomolecules. Also exhibits THF-independent aldolase activity toward beta-hydroxyamino acids, producing glycine and aldehydes, via a retro-aldol mechanism. In Bifidobacterium adolescentis (strain ATCC 15703 / DSM 20083 / NCTC 11814 / E194a), this protein is Serine hydroxymethyltransferase.